A 247-amino-acid polypeptide reads, in one-letter code: uncharacterized protein (247 aa).

The 75-residue stretch at 11-85 (GMSIGAVLDL…LKVIRAQLDA (75 aa)) folds into the HTH merR-type domain. A DNA-binding region (H-T-H motif) is located at residues 14–38 (IGAVLDLLRPDFPDVTISKIRFLEA).

As to quaternary structure, homodimer.

Functionally, transcriptional regulator that binds to its own promoter and thus may play a role in the regulation of the cotranscribed genes Rv1827 and Rv1828. Can also bind several promoter regions of genes that are essential, including ftsZ. Binds to the imperfect everted repeat sequence CTCAA through its winged-HTH motif. This is an uncharacterized protein from Mycobacterium tuberculosis (strain ATCC 25618 / H37Rv).